Consider the following 282-residue polypeptide: Undecaprenyl-diphosphatase (282 aa).

The next 8 membrane-spanning stretches (helical) occupy residues 2–22 (FDFIKSIIIGIVEGLTEFLPV), 47–67 (FTAVFDYAIQLGAIFAVIQLY), 90–110 (WIKVIVGVLPAMVFGLLLNNF), 115–135 (LLNPWVVSATLIIYGIAFIVI), 152–172 (ITFKMALFIGLFQVLSLVPGT), 190–210 (FVAAEFSFFLSIPVMFGVTIL), 225–245 (AQLFVMLIGFVVSWVVALFAI), and 259–279 (IFGWYRIVVGILFLILGIAGL).

The protein belongs to the UppP family.

The protein localises to the cell membrane. It carries out the reaction di-trans,octa-cis-undecaprenyl diphosphate + H2O = di-trans,octa-cis-undecaprenyl phosphate + phosphate + H(+). Its function is as follows. Catalyzes the dephosphorylation of undecaprenyl diphosphate (UPP). Confers resistance to bacitracin. The sequence is that of Undecaprenyl-diphosphatase from Leuconostoc citreum (strain KM20).